A 100-amino-acid chain; its full sequence is Succinate dehydrogenase subunit 7B, mitochondrial (100 aa).

The interval 1–25 (MAFLLNNASISSHLRSSSSQKTGDA) is disordered. Residues 1–32 (MAFLLNNASISSHLRSSSSQKTGDALSISRRG) constitute a mitochondrion transit peptide. A compositionally biased stretch (low complexity) spans 9 to 19 (SISSHLRSSSS).

As to quaternary structure, component of complex II composed of eight subunits in plants: four classical SDH subunits SDH1, SDH2, SDH3 and SDH4 (a flavoprotein (FP), an iron-sulfur protein (IP), and a cytochrome b composed of a large and a small subunit.), as well as four subunits unknown in mitochondria from bacteria and heterotrophic eukaryotes.

The protein resides in the mitochondrion inner membrane. It functions in the pathway carbohydrate metabolism; tricarboxylic acid cycle. In Arabidopsis thaliana (Mouse-ear cress), this protein is Succinate dehydrogenase subunit 7B, mitochondrial.